A 458-amino-acid polypeptide reads, in one-letter code: 3-isopropylmalate dehydratase large subunit (458 aa).

[4Fe-4S] cluster is bound by residues C339, C399, and C402.

The protein belongs to the aconitase/IPM isomerase family. LeuC type 1 subfamily. As to quaternary structure, heterodimer of LeuC and LeuD. It depends on [4Fe-4S] cluster as a cofactor.

It catalyses the reaction (2R,3S)-3-isopropylmalate = (2S)-2-isopropylmalate. It functions in the pathway amino-acid biosynthesis; L-leucine biosynthesis; L-leucine from 3-methyl-2-oxobutanoate: step 2/4. In terms of biological role, catalyzes the isomerization between 2-isopropylmalate and 3-isopropylmalate, via the formation of 2-isopropylmaleate. This Lactococcus lactis subsp. cremoris (strain MG1363) protein is 3-isopropylmalate dehydratase large subunit.